A 634-amino-acid polypeptide reads, in one-letter code: Protection of telomeres protein 1 (634 aa).

2 DNA-binding regions span residues 33 to 48 (KPPY…SVVT) and 270 to 273 (SYGR).

Belongs to the telombin family. As to quaternary structure, homodimer or homooligomer. Component of the shelterin complex (telosome) composed of TERF1, TERF2, TINF2, TERF2IP, ACD and POT1. Binds single-stranded telomeric DNA as a monomer. Associated component of the telomerase holoenzyme complex. Found in a complex with TERF1, TINF2 and TNKS1. Interacts with TNKS1. Forms heterodimers with ACD. Identified in a complex with ACD and single-stranded telomeric DNA. Ubiquitous.

It localises to the nucleus. The protein resides in the chromosome. It is found in the telomere. Functionally, component of the telomerase ribonucleoprotein (RNP) complex that is essential for the replication of chromosome termini. Is a component of the double-stranded telomeric DNA-binding TRF1 complex which is involved in the regulation of telomere length by cis-inhibition of telomerase. Also acts as a single-stranded telomeric DNA-binding protein and thus may act as a downstream effector of the TRF1 complex and may transduce information about telomere maintenance and/or length to the telomere terminus. Component of the shelterin complex (telosome) that is involved in the regulation of telomere length and protection. Shelterin associates with arrays of double-stranded TTAGGG repeats added by telomerase and protects chromosome ends; without its protective activity, telomeres are no longer hidden from the DNA damage surveillance and chromosome ends are inappropriately processed by DNA repair pathways. Binds to two or more telomeric single-stranded 5'-TTAGGG-3' repeats (G-strand) and with high specificity to a minimal telomeric single-stranded 5'-TAGGGTTAG-3' sequence. Binds telomeric single-stranded sequences internally or at proximity of a 3'-end. Its activity is TERT dependent but it does not increase TERT activity by itself. In contrast, the ACD-POT1 heterodimer enhances telomere elongation by increasing telomerase processivity. This Homo sapiens (Human) protein is Protection of telomeres protein 1 (POT1).